The sequence spans 455 residues: Zinc finger SWIM domain-containing protein 1 (455 aa).

The segment at 264–288 is disordered; the sequence is ASLSLAETPQDSHTPSEASAENPNT. An SWIM-type zinc finger spans residues 333 to 375; the sequence is MSIQILEDTHTVQPQPPASCSCYFNQAFHLPCRHILAMLSARQ.

The chain is Zinc finger SWIM domain-containing protein 1 (Zswim1) from Mus musculus (Mouse).